The sequence spans 344 residues: tRNA N6-adenosine threonylcarbamoyltransferase (344 aa).

2 residues coordinate Fe cation: H111 and H115. Substrate contacts are provided by residues 134–138 (LVSGG), D167, G180, D184, and N277. Position 305 (D305) interacts with Fe cation.

It belongs to the KAE1 / TsaD family. Requires Fe(2+) as cofactor.

Its subcellular location is the cytoplasm. It carries out the reaction L-threonylcarbamoyladenylate + adenosine(37) in tRNA = N(6)-L-threonylcarbamoyladenosine(37) in tRNA + AMP + H(+). Its function is as follows. Required for the formation of a threonylcarbamoyl group on adenosine at position 37 (t(6)A37) in tRNAs that read codons beginning with adenine. Is involved in the transfer of the threonylcarbamoyl moiety of threonylcarbamoyl-AMP (TC-AMP) to the N6 group of A37, together with TsaE and TsaB. TsaD likely plays a direct catalytic role in this reaction. The sequence is that of tRNA N6-adenosine threonylcarbamoyltransferase from Microcystis aeruginosa (strain NIES-843 / IAM M-2473).